The primary structure comprises 599 residues: Putative ATP-dependent helicase YeeB (599 aa).

Residues 30–207 form the Helicase ATP-binding domain; it reads AFEKRNSQYL…LLPEDEELFD (178 aa). An ATP-binding site is contributed by 43–50; sequence APPASGKS. The DEAH box motif lies at 154 to 157; sequence DEFH. Residues 236 to 408 enclose the Helicase C-terminal domain; sequence QYTSAINEVL…TVNTMLKAIS (173 aa).

It belongs to the helicase family.

The polypeptide is Putative ATP-dependent helicase YeeB (yeeB) (Bacillus subtilis (strain 168)).